The sequence spans 889 residues: MAELPQSRINERNITSEMRESFLDYAMSVIVARALPDVRDGLKPVHRRILYGLNEQGMTPDKSYKKSARIVGDVMGKYHPHGDLSIYEAMVRMAQDFSYRYPLVDGQGNFGSMDGDGAAAMRYTEARMTKITLELLRDINKDTIDFIDNYDGNEREPSVLPARFPNLLANGASGIAVGMATNIPPHNLTELINGVLSLSKNPDISIAELMEDIEGPDFPTAGLILGKSGIRRAYETGRGSIQMRSRAVIEERGGGRQRIVVTEIPFQVNKARMIEKIAELVRDKKIDGITDLRDETSLRTGVRVVIDVRKDANASVILNNLYKQTPLQTSFGVNMIALVNGRPKLINLKEALVHYLEHQKTVVRRRTQYNLRKAKDRAHILEGLRIALDHIDEIISTIRESDTDKVAMKSLQQRFKLSEKQAQAILDMRLRRLTGLERDKIEAEYNELLNYISELETILADEEVLLQLVRDELTEIRDRFGDDRRTEIQLGGFEDLEDEDLIPEEQIVITLSHNNYIKRLPVSTYRAQNRGGRGVQGMNTLEEDFVSQLVTLSTHDHVLFFTNKGRVYKLKGYEVPELSRQSKGIPVVNAIELENDEVISTMIAVKDLESEDNFLVFATKRGVVKRSALSNFSRINRNGKIAISFREDDELIAVRLTSGQEDILIGTSHASLIRFPESTLRPLGRTATGVKGITLREGDEVVGLDVAHANSVDEVLVVTENGYGKRTPVNDYRLSNRGGKGIKTATITERNGNVVCITTVTGEEDLMIVTNAGVIIRLDVADISQNGRAAQGVRLIRLGDDQFVSTVAKVKEDAEDETNEDEQSTSTVSEDGTEQQREAVVNDETPGNAIHTEVIDSEENDEDGRIEVRQDFMDRVEEDIQQSSDEDEE.

Positions 35-501 (LPDVRDGLKP…GFEDLEDEDL (467 aa)) constitute a Topo IIA-type catalytic domain. The active-site O-(5'-phospho-DNA)-tyrosine intermediate is Tyr123. The GyrA-box motif lies at 528–534 (QNRGGRG). The segment at 811–889 (KEDAEDETNE…IQQSSDEDEE (79 aa)) is disordered. Positions 813–823 (DAEDETNEDEQ) are enriched in acidic residues. Basic and acidic residues predominate over residues 863–875 (DGRIEVRQDFMDR). Residues 876 to 889 (VEEDIQQSSDEDEE) are compositionally biased toward acidic residues.

This sequence belongs to the type II topoisomerase GyrA/ParC subunit family. Heterotetramer, composed of two GyrA and two GyrB chains. In the heterotetramer, GyrA contains the active site tyrosine that forms a transient covalent intermediate with DNA, while GyrB binds cofactors and catalyzes ATP hydrolysis.

It is found in the cytoplasm. The enzyme catalyses ATP-dependent breakage, passage and rejoining of double-stranded DNA.. A type II topoisomerase that negatively supercoils closed circular double-stranded (ds) DNA in an ATP-dependent manner to modulate DNA topology and maintain chromosomes in an underwound state. Negative supercoiling favors strand separation, and DNA replication, transcription, recombination and repair, all of which involve strand separation. Also able to catalyze the interconversion of other topological isomers of dsDNA rings, including catenanes and knotted rings. Type II topoisomerases break and join 2 DNA strands simultaneously in an ATP-dependent manner. The polypeptide is DNA gyrase subunit A (Staphylococcus aureus (strain Mu50 / ATCC 700699)).